The following is a 181-amino-acid chain: ATP synthase subunit delta (181 aa).

It belongs to the ATPase delta chain family. As to quaternary structure, F-type ATPases have 2 components, F(1) - the catalytic core - and F(0) - the membrane proton channel. F(1) has five subunits: alpha(3), beta(3), gamma(1), delta(1), epsilon(1). F(0) has three main subunits: a(1), b(2) and c(10-14). The alpha and beta chains form an alternating ring which encloses part of the gamma chain. F(1) is attached to F(0) by a central stalk formed by the gamma and epsilon chains, while a peripheral stalk is formed by the delta and b chains.

Its subcellular location is the cell inner membrane. Its function is as follows. F(1)F(0) ATP synthase produces ATP from ADP in the presence of a proton or sodium gradient. F-type ATPases consist of two structural domains, F(1) containing the extramembraneous catalytic core and F(0) containing the membrane proton channel, linked together by a central stalk and a peripheral stalk. During catalysis, ATP synthesis in the catalytic domain of F(1) is coupled via a rotary mechanism of the central stalk subunits to proton translocation. Functionally, this protein is part of the stalk that links CF(0) to CF(1). It either transmits conformational changes from CF(0) to CF(1) or is implicated in proton conduction. This is ATP synthase subunit delta from Hyphomonas neptunium (strain ATCC 15444).